Here is a 241-residue protein sequence, read N- to C-terminus: Serine protease 58 (241 aa).

Residues 1 to 17 form the signal peptide; that stretch reads MKFILLWALLNLTVALA. The 222-residue stretch at 18–239 folds into the Peptidase S1 domain; it reads FNPDYTVSST…YIPWIENVIQ (222 aa). Cysteines 41 and 57 form a disulfide. Residues His-56 and Asp-101 each act as charge relay system in the active site. 3 disulfide bridges follow: Cys-133–Cys-201, Cys-165–Cys-180, and Cys-191–Cys-215. 2 N-linked (GlcNAc...) asparagine glycosylation sites follow: Asn-156 and Asn-173. The active-site Charge relay system is Ser-195.

The protein belongs to the peptidase S1 family.

The protein localises to the secreted. It catalyses the reaction Preferential cleavage: Arg-|-Xaa, Lys-|-Xaa.. This chain is Serine protease 58 (PRSS58), found in Homo sapiens (Human).